Reading from the N-terminus, the 477-residue chain is Sporulation-specific protein 77 (477 aa).

A disordered region spans residues 428–452; sequence SQQRESSNAESESITSSTEEDEEGL. Residues 432–444 are compositionally biased toward low complexity; that stretch reads ESSNAESESITSS.

The protein localises to the cytoplasm. Functionally, required for spore wall assembly and ascus formation. The polypeptide is Sporulation-specific protein 77 (SPO77) (Saccharomyces cerevisiae (strain ATCC 204508 / S288c) (Baker's yeast)).